We begin with the raw amino-acid sequence, 673 residues long: Translation factor GUF1 homolog, mitochondrial (673 aa).

A tr-type G domain is found at glutamate 68–proline 260. GTP contacts are provided by residues alanine 77–serine 84, aspartate 153–histidine 157, and asparagine 207–aspartate 210.

The protein belongs to the TRAFAC class translation factor GTPase superfamily. Classic translation factor GTPase family. LepA subfamily.

The protein localises to the mitochondrion inner membrane. It carries out the reaction GTP + H2O = GDP + phosphate + H(+). Functionally, promotes mitochondrial protein synthesis. May act as a fidelity factor of the translation reaction, by catalyzing a one-codon backward translocation of tRNAs on improperly translocated ribosomes. Binds to mitochondrial ribosomes in a GTP-dependent manner. The sequence is that of Translation factor GUF1 homolog, mitochondrial from Ricinus communis (Castor bean).